We begin with the raw amino-acid sequence, 552 residues long: Hydroxylamine reductase (552 aa).

Positions 3, 6, 18, and 25 each coordinate [2Fe-2S] cluster. 8 residues coordinate hybrid [4Fe-2O-2S] cluster: histidine 250, glutamate 274, cysteine 318, cysteine 406, cysteine 434, cysteine 459, glutamate 493, and lysine 495. Cysteine 406 carries the cysteine persulfide modification.

This sequence belongs to the HCP family. It depends on [2Fe-2S] cluster as a cofactor. Hybrid [4Fe-2O-2S] cluster is required as a cofactor.

The protein localises to the cytoplasm. It catalyses the reaction A + NH4(+) + H2O = hydroxylamine + AH2 + H(+). Functionally, catalyzes the reduction of hydroxylamine to form NH(3) and H(2)O. The protein is Hydroxylamine reductase of Shewanella woodyi (strain ATCC 51908 / MS32).